The sequence spans 72 residues: MEQPTSSINGEKRKSPCESNNENDEMQETPNRDLAPEPSLKKMKTSEYSTVLAFCYRKAKKIHSNQLENDQS.

Residues 1-44 are disordered; the sequence is MEQPTSSINGEKRKSPCESNNENDEMQETPNRDLAPEPSLKKMK.

This sequence belongs to the SPAN-X family.

The protein is Sperm protein associated with the nucleus on the X chromosome N1 (SPANXN1) of Homo sapiens (Human).